A 433-amino-acid chain; its full sequence is 3-phosphoshikimate 1-carboxyvinyltransferase (433 aa).

Lys23, Ser24, and Arg28 together coordinate 3-phosphoshikimate. Lys23 contributes to the phosphoenolpyruvate binding site. Residues Gly95 and Arg123 each contribute to the phosphoenolpyruvate site. Residues Ser167, Gln169, Asp317, and Lys344 each coordinate 3-phosphoshikimate. Gln169 contacts phosphoenolpyruvate. Catalysis depends on Asp317, which acts as the Proton acceptor. Arg348 and Arg390 together coordinate phosphoenolpyruvate.

It belongs to the EPSP synthase family. Monomer.

It is found in the cytoplasm. It catalyses the reaction 3-phosphoshikimate + phosphoenolpyruvate = 5-O-(1-carboxyvinyl)-3-phosphoshikimate + phosphate. Its pathway is metabolic intermediate biosynthesis; chorismate biosynthesis; chorismate from D-erythrose 4-phosphate and phosphoenolpyruvate: step 6/7. Functionally, catalyzes the transfer of the enolpyruvyl moiety of phosphoenolpyruvate (PEP) to the 5-hydroxyl of shikimate-3-phosphate (S3P) to produce enolpyruvyl shikimate-3-phosphate and inorganic phosphate. This Staphylococcus epidermidis (strain ATCC 12228 / FDA PCI 1200) protein is 3-phosphoshikimate 1-carboxyvinyltransferase.